Here is a 390-residue protein sequence, read N- to C-terminus: Chorismate synthase 2 (390 aa).

The NADP(+) site is built by Arg39 and Arg45. Residues 132–134 (RSS), 253–254 (NA), Gly298, 313–317 (KPIPT), and Arg339 each bind FMN.

Belongs to the chorismate synthase family. As to quaternary structure, homotetramer. FMNH2 is required as a cofactor.

The enzyme catalyses 5-O-(1-carboxyvinyl)-3-phosphoshikimate = chorismate + phosphate. It participates in metabolic intermediate biosynthesis; chorismate biosynthesis; chorismate from D-erythrose 4-phosphate and phosphoenolpyruvate: step 7/7. Its function is as follows. Catalyzes the anti-1,4-elimination of the C-3 phosphate and the C-6 proR hydrogen from 5-enolpyruvylshikimate-3-phosphate (EPSP) to yield chorismate, which is the branch point compound that serves as the starting substrate for the three terminal pathways of aromatic amino acid biosynthesis. This reaction introduces a second double bond into the aromatic ring system. The protein is Chorismate synthase 2 of Bacillus cereus (strain ATCC 14579 / DSM 31 / CCUG 7414 / JCM 2152 / NBRC 15305 / NCIMB 9373 / NCTC 2599 / NRRL B-3711).